The following is a 99-amino-acid chain: MLIMNLQLFAHKKGVGSSKNGRDSESKRLGVKSTDGEFVLAGNIIVRQRGTKIHPGNNVGRGKDDTLFAKIDGVVKFERVGKDKKKASVYPVDVEAIAE.

The propeptide occupies 1-9; it reads MLIMNLQLF.

Belongs to the bacterial ribosomal protein bL27 family. The N-terminus is cleaved by ribosomal processing cysteine protease Prp.

The polypeptide is Large ribosomal subunit protein bL27 (Clostridium botulinum (strain Alaska E43 / Type E3)).